The chain runs to 283 residues: Elongation factor Ts (283 aa).

The involved in Mg(2+) ion dislocation from EF-Tu stretch occupies residues 80–83; it reads TDFV.

Belongs to the EF-Ts family.

The protein localises to the cytoplasm. Functionally, associates with the EF-Tu.GDP complex and induces the exchange of GDP to GTP. It remains bound to the aminoacyl-tRNA.EF-Tu.GTP complex up to the GTP hydrolysis stage on the ribosome. In Pectobacterium carotovorum subsp. carotovorum (strain PC1), this protein is Elongation factor Ts.